The primary structure comprises 595 residues: NAD-dependent protein deacetylase hst4 (595 aa).

The tract at residues 1–106 (MAPRKTKPAT…HLDLTPRLGF (106 aa)) is disordered. A compositionally biased stretch (low complexity) spans 9 to 32 (ATKPAAKPTPASTATTSSCPSPKS). The Deacetylase sirtuin-type domain occupies 109–428 (YGDQEPQLNL…SADVERVKNE (320 aa)). Residues 134 to 153 (GAGI…DGLF) and 222 to 225 (QNID) contribute to the NAD(+) site. Catalysis depends on His253, which acts as the Proton acceptor. Zn(2+) contacts are provided by Cys261, Cys264, Cys283, and Cys286. NAD(+)-binding positions include 342-344 (GTS), 373-375 (NNE), and Cys394. A compositionally biased stretch (polar residues) spans 445–473 (QAQTGMLTPSSSYDGDVENASTTTLSNPA). The disordered stretch occupies residues 445-595 (QAQTGMLTPS…IPKGMGKLLD (151 aa)). Basic and acidic residues-rich tracts occupy residues 478-492 (KLTE…DAPK) and 530-543 (TPEE…EHKA).

Belongs to the sirtuin family. Class I subfamily. Requires Zn(2+) as cofactor.

Its subcellular location is the nucleus. It carries out the reaction N(6)-acetyl-L-lysyl-[protein] + NAD(+) + H2O = 2''-O-acetyl-ADP-D-ribose + nicotinamide + L-lysyl-[protein]. In terms of biological role, NAD-dependent histone deacetylase, which could function in telomeric silencing, cell cycle progression and chromosome stability. In Emericella nidulans (strain FGSC A4 / ATCC 38163 / CBS 112.46 / NRRL 194 / M139) (Aspergillus nidulans), this protein is NAD-dependent protein deacetylase hst4.